Here is a 1205-residue protein sequence, read N- to C-terminus: Partitioning defective 3 homolog B (1205 aa).

Disordered stretches follow at residues 83–104 (EPLHKIESPSGNPADRQSPDAF) and 137–165 (VRRSSDPVPGPPADTQPSASHPGGQSLKL). Ser100 carries the phosphoserine modification. Positions 201-289 (TRTVEISGEG…SPSVLLHVLP (89 aa)) constitute a PDZ 1 domain. The tract at residues 318–374 (VPPPVHGKSGLKTANLTGTDSPETDASASLQQNKSPRVPRLGGKPSSPSLSPLMGFG) is disordered. The segment covering 329 to 352 (KTANLTGTDSPETDASASLQQNKS) has biased composition (polar residues). 3 positions are modified to phosphoserine: Ser346, Ser352, and Ser368. Residues 356 to 374 (PRLGGKPSSPSLSPLMGFG) show a composition bias toward low complexity. PDZ domains follow at residues 383–468 (KIDL…VIAR) and 498–585 (EIPL…GMIQ). Ser635, Ser710, Ser728, Ser730, Ser746, Ser749, and Ser801 each carry phosphoserine. The segment at 707-743 (ASKSMDLVPDESKVHSLAGQKSESPSKDFGPTLGLKK) is disordered. Disordered stretches follow at residues 784 to 921 (AIDK…KHQE) and 1111 to 1205 (PYYP…TAAV). Polar residues predominate over residues 806 to 822 (HSGQGALNCESAPQGNS). 2 stretches are compositionally biased toward basic and acidic residues: residues 838–865 (KEKEKKKEKGKLKVKEKKRKEENEDPER) and 881–921 (KKED…KHQE). Ser1184 is subject to Phosphoserine.

This sequence belongs to the PAR3 family. As to quaternary structure, interacts with PARD6B. Interacts with INSC/inscuteable. Highly expressed in kidney, lung and skeletal muscle. Expressed at intermediate levels in brain, heart, placenta, liver and pancreas. Isoform 1 is predominant, while isoform 2 and isoform 3 are expressed at lower levels.

Its subcellular location is the endomembrane system. It localises to the cell junction. It is found in the tight junction. Its function is as follows. Putative adapter protein involved in asymmetrical cell division and cell polarization processes. May play a role in the formation of epithelial tight junctions. The protein is Partitioning defective 3 homolog B (PARD3B) of Homo sapiens (Human).